A 213-amino-acid chain; its full sequence is Adenylate kinase (213 aa).

10 to 15 lines the ATP pocket; the sequence is GSGKGT. Residues 30 to 59 form an NMP region; it reads SVGDLLRNIISSSSELGKKIKGTVESGNLI. AMP-binding positions include R36, 57–59, 83–86, and Q90; these read NLI and GFPR. Residues 125-160 are LID; it reads NRLACLDCKSIYSVSSFKSTTCAKCKSTRLEKRIDD. Position 126 (R126) interacts with ATP. Residues C129 and C132 each contribute to the Zn(2+) site. ATP is bound at residue 135–136; that stretch reads IY. 2 residues coordinate Zn(2+): C146 and C149. AMP is bound by residues R157 and R169. L195 is an ATP binding site.

Belongs to the adenylate kinase family. Monomer.

It localises to the cytoplasm. The enzyme catalyses AMP + ATP = 2 ADP. It functions in the pathway purine metabolism; AMP biosynthesis via salvage pathway; AMP from ADP: step 1/1. Catalyzes the reversible transfer of the terminal phosphate group between ATP and AMP. Plays an important role in cellular energy homeostasis and in adenine nucleotide metabolism. The protein is Adenylate kinase of Wolbachia sp. subsp. Drosophila simulans (strain wRi).